Here is a 710-residue protein sequence, read N- to C-terminus: uncharacterized protein (710 aa).

Coiled-coil stretches lie at residues 273-298 (LYRQERKELKNTKQRYLKKKNEMEEG) and 477-528 (RYEK…VADT).

This is an uncharacterized protein from Coxiella burnetii (strain RSA 493 / Nine Mile phase I).